A 1413-amino-acid chain; its full sequence is DNA-directed RNA polymerase subunit beta' (1413 aa).

Zn(2+) contacts are provided by cysteine 70, cysteine 72, cysteine 85, and cysteine 88. Aspartate 460, aspartate 462, and aspartate 464 together coordinate Mg(2+). The Zn(2+) site is built by cysteine 819, cysteine 893, cysteine 900, and cysteine 903. Residues 1392–1413 (EEAFDFGTPSAPAEEPQHPAAE) form a disordered region.

Belongs to the RNA polymerase beta' chain family. In terms of assembly, the RNAP catalytic core consists of 2 alpha, 1 beta, 1 beta' and 1 omega subunit. When a sigma factor is associated with the core the holoenzyme is formed, which can initiate transcription. Mg(2+) serves as cofactor. It depends on Zn(2+) as a cofactor.

It catalyses the reaction RNA(n) + a ribonucleoside 5'-triphosphate = RNA(n+1) + diphosphate. DNA-dependent RNA polymerase catalyzes the transcription of DNA into RNA using the four ribonucleoside triphosphates as substrates. In Burkholderia orbicola (strain MC0-3), this protein is DNA-directed RNA polymerase subunit beta'.